The sequence spans 180 residues: ATP synthase subunit b, chloroplastic (180 aa).

Residues 28 to 48 traverse the membrane as a helical segment; sequence VTTLINIGVVLCLLIIFGKGF.

It belongs to the ATPase B chain family. In terms of assembly, F-type ATPases have 2 components, F(1) - the catalytic core - and F(0) - the membrane proton channel. F(1) has five subunits: alpha(3), beta(3), gamma(1), delta(1), epsilon(1). F(0) has four main subunits: a(1), b(1), b'(1) and c(10-14). The alpha and beta chains form an alternating ring which encloses part of the gamma chain. F(1) is attached to F(0) by a central stalk formed by the gamma and epsilon chains, while a peripheral stalk is formed by the delta, b and b' chains.

The protein resides in the plastid. It is found in the chloroplast thylakoid membrane. Functionally, f(1)F(0) ATP synthase produces ATP from ADP in the presence of a proton or sodium gradient. F-type ATPases consist of two structural domains, F(1) containing the extramembraneous catalytic core and F(0) containing the membrane proton channel, linked together by a central stalk and a peripheral stalk. During catalysis, ATP synthesis in the catalytic domain of F(1) is coupled via a rotary mechanism of the central stalk subunits to proton translocation. Component of the F(0) channel, it forms part of the peripheral stalk, linking F(1) to F(0). The protein is ATP synthase subunit b, chloroplastic of Cuscuta obtusiflora (Peruvian dodder).